A 163-amino-acid polypeptide reads, in one-letter code: Large ribosomal subunit protein uL10 (163 aa).

It belongs to the universal ribosomal protein uL10 family. As to quaternary structure, part of the ribosomal stalk of the 50S ribosomal subunit. The N-terminus interacts with L11 and the large rRNA to form the base of the stalk. The C-terminus forms an elongated spine to which L12 dimers bind in a sequential fashion forming a multimeric L10(L12)X complex.

In terms of biological role, forms part of the ribosomal stalk, playing a central role in the interaction of the ribosome with GTP-bound translation factors. The chain is Large ribosomal subunit protein uL10 from Blochmanniella pennsylvanica (strain BPEN).